The primary structure comprises 754 residues: Disintegrin and metalloproteinase domain-containing protein 7 (754 aa).

The N-terminal stretch at 1–18 (MLPGCIFLMILLIPQVKE) is a signal peptide. The propeptide occupies 19–176 (KFILGVEGQQ…NYSCTELNFT (158 aa)). Topologically, residues 19 to 668 (KFILGVEGQQ…ACEETLHVTN (650 aa)) are extracellular. N-linked (GlcNAc...) asparagine glycans are attached at residues Asn-84, Asn-167, Asn-174, and Asn-184. The region spanning 199 to 394 (KYVELFIVAD…YKPTCMLNIP (196 aa)) is the Peptidase M12B domain. 4 disulfides stabilise this stretch: Cys-310-Cys-389, Cys-350-Cys-373, Cys-352-Cys-357, and Cys-460-Cys-480. A Disintegrin domain is found at 402-488 (FQFCGNKKLD…ACPKDQFRVN (87 aa)). N-linked (GlcNAc...) asparagine glycosylation is found at Asn-584 and Asn-668. The chain crosses the membrane as a helical span at residues 669–689 (ITILVVVLVLVIVGIGVLILL). The Cytoplasmic portion of the chain corresponds to 690–754 (VRYRKCIKLK…GIADPNQSAK (65 aa)).

Interacts with ITM2B in sperm; the interaction increases following capacitation. Interacts with HSPA5 and CANX.

It localises to the membrane. In terms of biological role, required for normal male fertility via maintenance of epithelial cell morphology in the caput epididymis and subsequently correct epididymis lumen structure required for sperm development. Plays a role in sperm motility, flagella morphology and tyrosine phosphorylation during sperm capacitance. Plays a role in normal expression levels of HSPA5, ITM2B and ADAM2 in sperm both prior to and post-capacitation. This is a non catalytic metalloprotease-like protein. This is Disintegrin and metalloproteinase domain-containing protein 7 from Homo sapiens (Human).